The sequence spans 377 residues: E3 ubiquitin-protein ligase rififylin (377 aa).

Residues 55-107 form an FYVE-type zinc finger; that stretch reads TGSEPSCKACGVHFASTTRKQTCLDCKKNFCMTCSSQEGNGPRLCLLCLRFRA. Residues 115–134 form the SAP 1 domain; sequence LMKMKVKDLRDYLSLHDIST. The disordered stretch occupies residues 176–249; that stretch reads LTQPQTSTVP…SVDSEDSFVP (74 aa). Residues 190–212 show a composition bias toward polar residues; the sequence is GLPSSPAQVTSVPLAQDQETQQA. Positions 235-245 are enriched in acidic residues; sequence EDETQSVDSED. Phosphoserine occurs at positions 240, 243, 246, and 254. Positions 264–278 constitute an SAP 2 domain; sequence IEGLTVRQLKEILAR. The segment at 330–365 adopts an RING-type zinc-finger fold; the sequence is CKICMDSPIDCVLLECGHMVTCTKCGKRMNECPICR.

As to quaternary structure, interacts with CASP8 and CASP10. Interacts with RIPK1 (via protein kinase domain); involved in RIPK1 ubiquitination. Interacts with PRR5L. Interacts (via RING-type zinc finger) with p53/TP53; involved in p53/TP53 ubiquitination. Interacts (via RING-type zinc finger) with MDM2; the interaction stabilizes MDM2. In terms of processing, autoubiquitinated. Palmitoylated. Post-translationally, undergoes caspase-mediated cleavage upon death-receptor activation, by TNFSF10 for instance. May be mediated by the caspases CASP8 and CASP10 in a negative feedback loop. As to expression, ubiquitous. Detected in heart, brain, spleen, lung, liver, skeletal muscle, kidney, testis, thymus, whole embryo and embryonic stem cells.

The protein localises to the cytoplasm. It localises to the cytosol. The protein resides in the cell membrane. Its subcellular location is the recycling endosome membrane. The enzyme catalyses S-ubiquitinyl-[E2 ubiquitin-conjugating enzyme]-L-cysteine + [acceptor protein]-L-lysine = [E2 ubiquitin-conjugating enzyme]-L-cysteine + N(6)-ubiquitinyl-[acceptor protein]-L-lysine.. It participates in protein modification; protein ubiquitination. In terms of biological role, E3 ubiquitin-protein ligase that regulates several biological processes through the ubiquitin-mediated proteasomal degradation of various target proteins. Mediates 'Lys-48'-linked polyubiquitination of PRR5L and its subsequent proteasomal degradation thereby indirectly regulating cell migration through the mTORC2 complex. Also ubiquitinates the caspases CASP8 and CASP10, promoting their proteasomal degradation, to negatively regulate apoptosis downstream of death domain receptors. Also negatively regulates the tumor necrosis factor-mediated signaling pathway through targeting of RIPK1 to ubiquitin-mediated proteasomal degradation. Negatively regulates p53/TP53 through its direct ubiquitination and targeting to proteasomal degradation. Indirectly, may also negatively regulate p53/TP53 through ubiquitination and degradation of SFN. May also play a role in endocytic recycling. The sequence is that of E3 ubiquitin-protein ligase rififylin from Mus musculus (Mouse).